The sequence spans 144 residues: uncharacterized protein (144 aa).

4 consecutive transmembrane segments (helical) span residues 27 to 47 (VVCA…IPDI), 49 to 69 (LLPI…LLAL), 83 to 103 (IVLL…DATV), and 106 to 126 (ALDM…ILNV).

Its subcellular location is the membrane. This is an uncharacterized protein from Saccharomyces cerevisiae (strain ATCC 204508 / S288c) (Baker's yeast).